Here is a 92-residue protein sequence, read N- to C-terminus: MEITDVRVRKLNEEGKMKAVVSVTFDNEFVVHDIKVIEGQNGLFIAMPSRKTPEGEFKDIAHPINSDTRNKLQSAILKEYEKAKEQEAAHKE.

This sequence belongs to the SpoVG family.

Its function is as follows. Could be involved in septation. The protein is Putative septation protein SpoVG of Thermoanaerobacter sp. (strain X514).